A 200-amino-acid polypeptide reads, in one-letter code: Protein RISC-INTERACTING CLEARING 3'-5' EXORIBONUCLEASE 1 (200 aa).

Oligomerization stretches follow at residues 35–66, 102–127, and 166–173; these read SKIL…KSEW, KFVT…IVIR, and DSIQSKWD.

This sequence belongs to the RICE family. In terms of assembly, homohexamer with DnaQ-like exonuclease fold in a ring-shaped structure with a central cavity. Component of AGO1 and AGO10-centered RNA-induced silencing complexes (RISC). Interacts with and acts as a cofactor of AGO1 and AGO10. In terms of tissue distribution, ubiquitously expressed throughout development in germinating seeds, cotyledons, leaves and roots of young seedlings and adult plants, stems and inflorescence.

It localises to the cytoplasm. The enzyme catalyses Exonucleolytic cleavage in the 3'- to 5'-direction to yield nucleoside 5'-phosphates.. Its function is as follows. 3'-to-5' exoribonuclease (RNase) specifically targeting single-stranded RNAs. Triggers miRNA accumulation in RNA-induced silencing complex (RISC), composed of miRNAs and AGO proteins, by degrading uridylated cleavage fragments. Required during plant growth and development. The chain is Protein RISC-INTERACTING CLEARING 3'-5' EXORIBONUCLEASE 1 from Arabidopsis thaliana (Mouse-ear cress).